The sequence spans 237 residues: Proteasome subunit beta type-1 (237 aa).

It belongs to the peptidase T1B family. In terms of assembly, the 26S proteasome consists of a 20S proteasome core and two 19S regulatory subunits. The 20S proteasome core is a barrel-shaped complex made of 28 subunits that are arranged in four stacked rings. The two outer rings are each formed by seven alpha subunits, and the two inner rings are formed by seven beta subunits. The proteolytic activity is exerted by three beta-subunits psmb5, psmb6 and psmb7.

It is found in the cytoplasm. The protein resides in the nucleus. Functionally, non-catalytic component of the 20S core proteasome complex involved in the proteolytic degradation of most intracellular proteins. This complex plays numerous essential roles within the cell by associating with different regulatory particles. Associated with two 19S regulatory particles, forms the 26S proteasome and thus participates in the ATP-dependent degradation of ubiquitinated proteins. The 26S proteasome plays a key role in the maintenance of protein homeostasis by removing misfolded or damaged proteins that could impair cellular functions, and by removing proteins whose functions are no longer required. Associated with the PA200 or PA28, the 20S proteasome mediates ubiquitin-independent protein degradation. This is Proteasome subunit beta type-1 from Danio rerio (Zebrafish).